We begin with the raw amino-acid sequence, 183 residues long: MWKFIKSATDQNNWLEHDQNEIVFWGRSNVGKSSLINALASQKIAKTSSTPGRTRLINYFETQRKKIIVDLPGYGFASMSKKAQSKISGIIDFYFRNSKNSKNICILIDAKIGFSYIDLEMIDYLKSLGLLFDIIITKIDKANQSQKHRVKQQALTFSDDINIFMVSSEKKQGLSDLVEHFEL.

In terms of domain architecture, EngB-type G spans 18–183 (DQNEIVFWGR…LSDLVEHFEL (166 aa)). GTP is bound by residues 26 to 33 (GRSNVGKS), 52 to 56 (GRTRL), 70 to 73 (DLPG), 137 to 140 (TKID), and 166 to 168 (VSS). Serine 33 and threonine 54 together coordinate Mg(2+).

The protein belongs to the TRAFAC class TrmE-Era-EngA-EngB-Septin-like GTPase superfamily. EngB GTPase family. The cofactor is Mg(2+).

Necessary for normal cell division and for the maintenance of normal septation. The polypeptide is Probable GTP-binding protein EngB (Metamycoplasma arthritidis (strain 158L3-1) (Mycoplasma arthritidis)).